Consider the following 704-residue polypeptide: Polyribonucleotide nucleotidyltransferase (704 aa).

The Mg(2+) site is built by Asp-485 and Asp-491. One can recognise a KH domain in the interval 552–611; it reads PKTETIQIDPDKIRSVIGAGGKVINKIIQDTGVKIDIKEDGSVFVSSSDHAGVKEAIKII. An S1 motif domain is found at 621–689; the sequence is GEIYLGKVTK…SQGRINLSRK (69 aa).

This sequence belongs to the polyribonucleotide nucleotidyltransferase family. The cofactor is Mg(2+).

The protein resides in the cytoplasm. It catalyses the reaction RNA(n+1) + phosphate = RNA(n) + a ribonucleoside 5'-diphosphate. In terms of biological role, involved in mRNA degradation. Catalyzes the phosphorolysis of single-stranded polyribonucleotides processively in the 3'- to 5'-direction. In Clostridium botulinum (strain Eklund 17B / Type B), this protein is Polyribonucleotide nucleotidyltransferase.